The chain runs to 365 residues: Donuts protein 1 (365 aa).

Positions 28–49 are disordered; it reads NSGLELPSQDYTNVEEKESSPK. The 44-residue stretch at 82–125 folds into the CUE domain; sequence EKLCVLKELKIAFPEVDDTLIKAILIASQGVLEPAFNSLLYYSS. Disordered stretches follow at residues 215 to 246 and 286 to 335; these read HNTI…KGVN and ESEE…YKSA. The segment covering 224–244 has biased composition (basic and acidic residues); it reads SILKGKEKGKEEEKEKGEEKG. Residues 286-295 show a composition bias toward acidic residues; it reads ESEEEEEQDV. Residues 315-331 show a composition bias toward basic and acidic residues; it reads EAQRDSADRLPAKDDGG.

In terms of assembly, may interact directly with ADY3. Probable component of a spindle pole body (SPB) complex composed of ADY3, SSP1, DON1, MPC54, SPO21/MPC70, NUD1 and CNM67.

It is found in the prospore membrane. In terms of biological role, involved in the pathway that organizes the prospore membrane (PSM) during sporulation. The chain is Donuts protein 1 (DON1) from Saccharomyces cerevisiae (strain ATCC 204508 / S288c) (Baker's yeast).